Reading from the N-terminus, the 167-residue chain is Transcriptional repressor NrdR (167 aa).

The segment at 3–34 (CPFCRNPDSRVVDSRMADDGSAIRRRRQCPEC) is a zinc-finger region. Positions 46-136 (LSVIKRSGVG…VYQAFESLED (91 aa)) constitute an ATP-cone domain. Residues 148–167 (AQEDAAERPATPRKPEKTSL) are disordered.

Belongs to the NrdR family. Zn(2+) serves as cofactor.

Negatively regulates transcription of bacterial ribonucleotide reductase nrd genes and operons by binding to NrdR-boxes. In Pseudarthrobacter chlorophenolicus (strain ATCC 700700 / DSM 12829 / CIP 107037 / JCM 12360 / KCTC 9906 / NCIMB 13794 / A6) (Arthrobacter chlorophenolicus), this protein is Transcriptional repressor NrdR.